The sequence spans 590 residues: V-type ATP synthase alpha chain (590 aa).

231 to 238 (GPFGSGKT) is a binding site for ATP.

This sequence belongs to the ATPase alpha/beta chains family.

It catalyses the reaction ATP + H2O + 4 H(+)(in) = ADP + phosphate + 5 H(+)(out). Produces ATP from ADP in the presence of a proton gradient across the membrane. The V-type alpha chain is a catalytic subunit. The protein is V-type ATP synthase alpha chain of Clostridium botulinum (strain Langeland / NCTC 10281 / Type F).